A 433-amino-acid chain; its full sequence is Elongation factor 1-alpha (433 aa).

Residues Lys-5–Arg-227 form the tr-type G domain. The tract at residues Gly-14–Ser-21 is G1. Gly-14–Ser-21 lines the GTP pocket. Ser-21 is a binding site for Mg(2+). The G2 stretch occupies residues Gly-70 to Asp-74. The tract at residues Asp-91–Gly-94 is G3. GTP-binding positions include Asp-91–His-95 and Asn-153–Asp-156. Positions Asn-153–Asp-156 are G4. The segment at Ser-192–Trp-194 is G5.

Belongs to the TRAFAC class translation factor GTPase superfamily. Classic translation factor GTPase family. EF-Tu/EF-1A subfamily.

It is found in the cytoplasm. The enzyme catalyses GTP + H2O = GDP + phosphate + H(+). GTP hydrolase that promotes the GTP-dependent binding of aminoacyl-tRNA to the A-site of ribosomes during protein biosynthesis. The chain is Elongation factor 1-alpha from Thermofilum pendens (strain DSM 2475 / Hrk 5).